The following is an 860-amino-acid chain: Leucine--tRNA ligase (860 aa).

Positions 42–52 (PYPSGRLHMGH) match the 'HIGH' region motif. Residues 619–623 (KMSKS) carry the 'KMSKS' region motif. K622 provides a ligand contact to ATP.

This sequence belongs to the class-I aminoacyl-tRNA synthetase family.

The protein resides in the cytoplasm. It carries out the reaction tRNA(Leu) + L-leucine + ATP = L-leucyl-tRNA(Leu) + AMP + diphosphate. The chain is Leucine--tRNA ligase from Shigella dysenteriae serotype 1 (strain Sd197).